We begin with the raw amino-acid sequence, 305 residues long: D-alanine--D-alanine ligase (305 aa).

One can recognise an ATP-grasp domain in the interval 99 to 300 (KLFFEKAGIR…YEEMIQTFVN (202 aa)). ATP is bound at residue 126 to 181 (NFTGTYPVVVKPNQEGSTIGLTVAETEEELLQGIEEAFRHDDTILIEEFIAGTEVT).

It belongs to the D-alanine--D-alanine ligase family.

It localises to the cytoplasm. It carries out the reaction 2 D-alanine + ATP = D-alanyl-D-alanine + ADP + phosphate + H(+). It participates in cell wall biogenesis; peptidoglycan biosynthesis. Cell wall formation. The protein is D-alanine--D-alanine ligase of Halalkalibacterium halodurans (strain ATCC BAA-125 / DSM 18197 / FERM 7344 / JCM 9153 / C-125) (Bacillus halodurans).